Consider the following 286-residue polypeptide: 2,3,4,5-tetrahydropyridine-2,6-dicarboxylate N-succinyltransferase (286 aa).

Residues Arg-109 and Asp-146 each coordinate substrate.

The protein belongs to the transferase hexapeptide repeat family. In terms of assembly, homotrimer.

The protein localises to the cytoplasm. The catalysed reaction is (S)-2,3,4,5-tetrahydrodipicolinate + succinyl-CoA + H2O = (S)-2-succinylamino-6-oxoheptanedioate + CoA. The protein operates within amino-acid biosynthesis; L-lysine biosynthesis via DAP pathway; LL-2,6-diaminopimelate from (S)-tetrahydrodipicolinate (succinylase route): step 1/3. The sequence is that of 2,3,4,5-tetrahydropyridine-2,6-dicarboxylate N-succinyltransferase from Bartonella tribocorum (strain CIP 105476 / IBS 506).